We begin with the raw amino-acid sequence, 733 residues long: Arginine decarboxylase 1A, chloroplastic (733 aa).

The N-terminal 44 residues, 1-44, are a transit peptide targeting the chloroplast; that stretch reads MPALGCCVDAAVSPPPGYSFLWDSSLPAPEIFPSGVPPSTNTAV. Lysine 157 is modified (N6-(pyridoxal phosphate)lysine). Pyridoxal 5'-phosphate contacts are provided by residues serine 309, glycine 346, and 395 to 398; that span reads ESGR. 460–461 is a binding site for substrate; the sequence is YA. Cysteine 548 (proton donor; shared with dimeric partner) is an active-site residue. Aspartate 549 serves as a coordination point for substrate. Tyrosine 592 is a binding site for pyridoxal 5'-phosphate.

The protein belongs to the Orn/Lys/Arg decarboxylase class-II family. SpeA subfamily. Interacts, via its C-terminal internal region, with the tobacco mosaic virus (TMV) replicase helicase region. Mg(2+) serves as cofactor. It depends on pyridoxal 5'-phosphate as a cofactor.

It localises to the plastid. The protein resides in the chloroplast. The catalysed reaction is L-arginine + H(+) = agmatine + CO2. Its pathway is alkaloid biosynthesis; nicotine biosynthesis. It functions in the pathway amine and polyamine biosynthesis; agmatine biosynthesis; agmatine from L-arginine: step 1/1. Involved in the biosynthesis of pyridine alkaloid natural products, leading mainly to the production of anabasine, anatabine, nicotine and nornicotine, effective deterrents against herbivores with antiparasitic and pesticide properties (neurotoxins); nornicotine serves as the precursor in the synthesis of the carcinogen compound N'-nitrosonornicotine (NNN). Required for the biosynthesis of putrescine. Catalyzes the first step of polyamine (PA) biosynthesis to produce putrescine from arginine. The sequence is that of Arginine decarboxylase 1A, chloroplastic from Nicotiana tabacum (Common tobacco).